The sequence spans 224 residues: UPF0758 protein Csal_2972 (224 aa).

An MPN domain is found at 102–224 (ALTSPTLVRR…VVSFAERGWL (123 aa)). The Zn(2+) site is built by H173, H175, and D186. Positions 173 to 186 (HNHPSGVAEPSDAD) match the JAMM motif motif.

It belongs to the UPF0758 family.

This is UPF0758 protein Csal_2972 from Chromohalobacter salexigens (strain ATCC BAA-138 / DSM 3043 / CIP 106854 / NCIMB 13768 / 1H11).